Consider the following 351-residue polypeptide: 3-hydroxy-4-methyl-anthranilyl-[aryl-carrier protein] 5-monooxygenase (351 aa).

Belongs to the aromatic-ring hydroxylase family. It depends on FAD as a cofactor.

It catalyses the reaction 3-hydroxy-4-methylanthranilyl-[aryl-carrier protein] + NADH + O2 + H(+) = 3,5-dihydroxy-4-methylanthranilyl-[aryl-carrier protein] + NAD(+) + H2O. Its pathway is antibiotic biosynthesis. Involved in the biosynthesis of the antitumor antibiotic sibiromycin. Hydroxylates the C5 position of the peptidyl carrier protein (PCP)-bound 4-methyl-3-hydroxyanthranilic acid (4-MHA or 3H4MAA), leading to the formation of the fully substituted anthranilate moiety found in sibiromycin. This is 3-hydroxy-4-methyl-anthranilyl-[aryl-carrier protein] 5-monooxygenase from Streptosporangium sibiricum.